We begin with the raw amino-acid sequence, 908 residues long: Flap endonuclease GEN homolog 1 (908 aa).

Residues 2–96 (GVNDLWQILE…SKRTQTRYGP (95 aa)) are XPG-N domain. Mg(2+) is bound by residues Asp30, Glu75, Glu134, Glu136, Asp155, Asp157, and Asp208. The interval 122 to 208 (ECLGMPWVQA…VGLAVLLGCD (87 aa)) is XPG-I domain. Positions 208-383 (DYLPKGVPGV…LLVLLTRYDM (176 aa)) are 5'-3' exonuclease domain. Positions 389-463 (GRKTSNQLQP…VYQKQLSETK (75 aa)) are chromodomain. Disordered regions lie at residues 460–482 (SETK…LPEA), 629–650 (YESE…QSNP), 792–834 (RDSS…NKLR), and 853–886 (AEDE…SWEN). The segment covering 465–476 (RKQKSMKNKPKG) has biased composition (basic residues). Residues Ser794 and Ser795 each carry the phosphoserine modification. Residues 824 to 834 (HVRDSTHNKLR) are compositionally biased toward basic and acidic residues.

It belongs to the XPG/RAD2 endonuclease family. GEN subfamily. As to quaternary structure, largely monomeric, dimerizes on the Holliday junction and the first nick occurs upon dimerization at the junction. Requires Mg(2+) as cofactor. As to expression, expressed in bone marrow and testis and to a lesser extent in thymus, spleen, brain and colon.

The protein localises to the nucleus. Functionally, endonuclease which resolves Holliday junctions (HJs) by the introduction of symmetrically related cuts across the junction point, to produce nicked duplex products in which the nicks can be readily ligated. Four-way DNA intermediates, also known as Holliday junctions, are formed during homologous recombination and DNA repair, and their resolution is necessary for proper chromosome segregation. Cleaves HJs by a nick and counter-nick mechanism involving dual coordinated incisions that lead to the formation of ligatable nicked duplex products. Cleavage of the first strand is rate limiting, while second strand cleavage is rapid. Largely monomeric, dimerizes on the HJ and the first nick occurs upon dimerization at the junction. Efficiently cleaves both single and double HJs contained within large recombination intermediates. Exhibits a weak sequence preference for incision between two G residues that reside in a T-rich region of DNA. Also has endonuclease activity on 5'-flap and replication fork (RF) DNA substrates. The chain is Flap endonuclease GEN homolog 1 (Gen1) from Mus musculus (Mouse).